The chain runs to 799 residues: Cadherin-8 (799 aa).

Positions 1-29 (MPERLAEMLLDLWTPLIILWITLPPCIYM) are cleaved as a signal peptide. Positions 30–61 (APMNQSQVLMSGSPLELNSLGEEQRILNRSKR) are excised as a propeptide. Residues N33 and N57 are each glycosylated (N-linked (GlcNAc...) asparagine). Cadherin domains lie at 62–167 (GWVW…APEF), 168–276 (LNGP…PPKF), 277–391 (AQSL…PPVF), 392–494 (SSPT…DNAP), and 495–616 (EFAS…YVLP). At 62–621 (GWVWNQMFVL…AYVLPIGLSM (560 aa)) the chain is on the extracellular side. Residue N188 is glycosylated (N-linked (GlcNAc...) asparagine). N463, N473, and N544 each carry an N-linked (GlcNAc...) asparagine glycan. The chain crosses the membrane as a helical span at residues 622-642 (GALIAILACIILLLVIVVLFV). At 643-799 (TLRRHKNEPL…YSVGESDKET (157 aa)) the chain is on the cytoplasmic side. Phosphoserine is present on S795.

As to expression, mainly expressed in brain. Found in certain nerve cell lines, such as retinoblasts, glioma cells and neuroblasts.

The protein localises to the cell membrane. Functionally, cadherins are calcium-dependent cell adhesion proteins. They preferentially interact with themselves in a homophilic manner in connecting cells; cadherins may thus contribute to the sorting of heterogeneous cell types. The sequence is that of Cadherin-8 (CDH8) from Homo sapiens (Human).